A 225-amino-acid polypeptide reads, in one-letter code: Cytidylate kinase (225 aa).

11–19 lines the ATP pocket; that stretch reads GPAAAGKST.

It belongs to the cytidylate kinase family. Type 1 subfamily.

The protein localises to the cytoplasm. The catalysed reaction is CMP + ATP = CDP + ADP. It carries out the reaction dCMP + ATP = dCDP + ADP. The sequence is that of Cytidylate kinase from Bacillus cereus (strain G9842).